Reading from the N-terminus, the 115-residue chain is Large ribosomal subunit protein uL24 (115 aa).

The disordered stretch occupies residues 49–68; sequence NMKTKHHPPSKDQEKGSITK.

The protein belongs to the universal ribosomal protein uL24 family. In terms of assembly, part of the 50S ribosomal subunit.

Functionally, one of two assembly initiator proteins, it binds directly to the 5'-end of the 23S rRNA, where it nucleates assembly of the 50S subunit. Its function is as follows. One of the proteins that surrounds the polypeptide exit tunnel on the outside of the subunit. This chain is Large ribosomal subunit protein uL24, found in Phytoplasma australiense.